The primary structure comprises 541 residues: Carotenoid-cleaving dioxygenase, mitochondrial (541 aa).

Fe cation is bound by residues His-188, His-248, His-319, and His-535.

This sequence belongs to the carotenoid oxygenase family. It depends on Fe(2+) as a cofactor. Widely expressed. Detected in heart, spleen, lung, intestine, colon, stomach, kidney, bladder, and prostate. Highly expressed in liver and testis (at protein level).

It localises to the mitochondrion. The enzyme catalyses all-trans-beta-carotene + O2 = beta-ionone + all-trans-10'-apo-beta-carotenal. The catalysed reaction is 5-cis-lycopene + O2 = 5-cis-10'-apo-lycopenal + (3E,5E)-6,10-dimethylundeca-3,5,9-trien-2-one. It catalyses the reaction 13-cis-lycopene + O2 = 13-cis-10'-apo-lycopenal + (3E,5E)-6,10-dimethylundeca-3,5,9-trien-2-one. It carries out the reaction lutein + O2 = (3R,6R)-hydroxy-alpha-ionone + (3R)-3-hydroxy-10'-apo-beta-carotenal. The enzyme catalyses lutein + O2 = (3R,6R)-3-hydroxy-10'-apo-alpha-carotenal + (3R)-hydroxy-beta-ionone. The catalysed reaction is all-trans-zeaxanthin + 2 O2 = 4,9-dimethyldodeca-2,4,6,8,10-pentaenedial + 2 (3R)-hydroxy-beta-ionone. It catalyses the reaction all-trans-zeaxanthin + O2 = (3R)-3-hydroxy-10'-apo-beta-carotenal + (3R)-hydroxy-beta-ionone. It carries out the reaction beta-cryptoxanthin + O2 = all-trans-10'-apo-beta-carotenal + (3R)-hydroxy-beta-ionone. The enzyme catalyses all-trans-10'-apo-beta-carotenal + O2 = beta-ionone + 4,9-dimethyldodeca-2,4,6,8,10-pentaenedial. The catalysed reaction is (3R)-3-hydroxy-10'-apo-beta-carotenal + O2 = 4,9-dimethyldodeca-2,4,6,8,10-pentaenedial + (3R)-hydroxy-beta-ionone. It catalyses the reaction (3R,6R)-3-hydroxy-10'-apo-alpha-carotenal + O2 = (3R,6R)-hydroxy-alpha-ionone + 4,9-dimethyldodeca-2,4,6,8,10-pentaenedial. Broad specificity mitochondrial dioxygenase that mediates the asymmetric oxidative cleavage of carotenoids. Cleaves carotenes (pure hydrocarbon carotenoids) such as all-trans-beta-carotene and lycopene as well as xanthophylls (oxygenated carotenoids) such as zeaxanthin, lutein and beta-cryptoxanthin at both the 9,10 and the 9',10' carbon-carbon double bond. Through its function in carotenoids metabolism regulates oxidative stress and the production of important signaling molecules. The chain is Carotenoid-cleaving dioxygenase, mitochondrial from Mustela putorius furo (European domestic ferret).